The following is an 816-amino-acid chain: Transcription factor qa-1f (816 aa).

The segment at residues 76-103 (CDQCRAAREKCDGIQPACFPCVSQGRSC) is a DNA-binding region (zn(2)-C6 fungal-type). Over residues 184–202 (SGQAAQDPSEDGQSPSEDI) the composition is skewed to polar residues. Positions 184 to 235 (SGQAAQDPSEDGQSPSEDINVQDAGAKTSDFPHAPHLTFSAPKSSTAETRTL) are disordered.

The protein localises to the nucleus. Functionally, transcription activator; part of the qa gene cluster that mediates the catabolism of quinic acid (QA) and as such, allows the use of QA as a sole carbon source. Activates the expression of qa cluster genes by binding to a 16 base-pair consensus sequence 5'-GGRTAARYRYTTAYCC-3' present in the promoters of the target genes. Regulates its own expression. May regulate the expression of many other genes inclusing genes with products in 8 mutually connected metabolic pathways: (1) starch and sucrose metabolism; (2) glycolysis/glucanogenesis; (3) TCA Cycle; (4) butanoate metabolism; (5) pyruvate metabolism; (6) aromatic amino acid and QA metabolism; (7) valine, leucine, and isoleucine degradation; and (8) transport of sugars and amino acids. This Neurospora crassa (strain ATCC 24698 / 74-OR23-1A / CBS 708.71 / DSM 1257 / FGSC 987) protein is Transcription factor qa-1f.